Reading from the N-terminus, the 130-residue chain is Small ribosomal subunit protein uS9 (130 aa).

A disordered region spans residues 98–130 (LKRAGMLTRDPRMKERKKPGLKGARRSPQFSKR). Residues 111 to 130 (KERKKPGLKGARRSPQFSKR) show a composition bias toward basic residues.

This sequence belongs to the universal ribosomal protein uS9 family.

This is Small ribosomal subunit protein uS9 from Macrococcus caseolyticus (strain JCSC5402) (Macrococcoides caseolyticum).